A 130-amino-acid chain; its full sequence is Small ribosomal subunit protein uS8 (130 aa).

This sequence belongs to the universal ribosomal protein uS8 family. As to quaternary structure, part of the 30S ribosomal subunit. Contacts proteins S5 and S12.

Its function is as follows. One of the primary rRNA binding proteins, it binds directly to 16S rRNA central domain where it helps coordinate assembly of the platform of the 30S subunit. The polypeptide is Small ribosomal subunit protein uS8 (Proteus mirabilis (strain HI4320)).